The sequence spans 288 residues: Small ribosomal subunit protein uS2 (288 aa).

It belongs to the universal ribosomal protein uS2 family. In terms of assembly, component of the small ribosomal subunit. Mature ribosomes consist of a small (40S) and a large (60S) subunit. The 40S subunit contains about 33 different proteins and 1 molecule of RNA (18S). The 60S subunit contains about 49 different proteins and 3 molecules of RNA (28S, 5.8S and 5S). Interacts with ribosomal protein S21.

It is found in the cytoplasm. Required for the assembly and/or stability of the 40S ribosomal subunit. Required for the processing of the 20S rRNA-precursor to mature 18S rRNA in a late step of the maturation of 40S ribosomal subunits. This is Small ribosomal subunit protein uS2 from Aedes aegypti (Yellowfever mosquito).